Consider the following 490-residue polypeptide: Homoserine O-acetyltransferase (490 aa).

An AB hydrolase-1 domain is found at 47–355 (NAILVCHALT…DYGHDAFLLE (309 aa)). Serine 152 functions as the Nucleophile in the catalytic mechanism. Arginine 222 lines the substrate pocket. Residues aspartate 316 and histidine 349 contribute to the active site. Residue aspartate 350 participates in substrate binding. CBS domains lie at 376-436 (MKTD…LEDV) and 437-490 (MTKD…ISSY).

The protein belongs to the AB hydrolase superfamily. MetX family. As to quaternary structure, homodimer.

It is found in the cytoplasm. The catalysed reaction is L-homoserine + acetyl-CoA = O-acetyl-L-homoserine + CoA. The protein operates within amino-acid biosynthesis; L-methionine biosynthesis via de novo pathway; O-acetyl-L-homoserine from L-homoserine: step 1/1. In terms of biological role, transfers an acetyl group from acetyl-CoA to L-homoserine, forming acetyl-L-homoserine. The protein is Homoserine O-acetyltransferase of Methanobrevibacter ruminantium (strain ATCC 35063 / DSM 1093 / JCM 13430 / OCM 146 / M1) (Methanobacterium ruminantium).